The following is a 240-amino-acid chain: HTH-type transcriptional regulator Mce2R (240 aa).

The HTH gntR-type domain occupies arginine 9–phenylalanine 77. The H-T-H motif DNA-binding region spans glutamate 37–lysine 56.

In terms of biological role, negatively regulates the expression of its operon as well as expression of end (endonuclease 4). The polypeptide is HTH-type transcriptional regulator Mce2R (mce2R) (Mycobacterium tuberculosis (strain CDC 1551 / Oshkosh)).